A 345-amino-acid polypeptide reads, in one-letter code: Biotin synthase (345 aa).

Residues 59–286 (NEVQLSTLLS…TTMVRLSAGR (228 aa)) form the Radical SAM core domain. [4Fe-4S] cluster contacts are provided by Cys-74, Cys-78, and Cys-81. The [2Fe-2S] cluster site is built by Cys-118, Cys-149, Cys-209, and Arg-281.

The protein belongs to the radical SAM superfamily. Biotin synthase family. Homodimer. Requires [4Fe-4S] cluster as cofactor. [2Fe-2S] cluster is required as a cofactor.

The catalysed reaction is (4R,5S)-dethiobiotin + (sulfur carrier)-SH + 2 reduced [2Fe-2S]-[ferredoxin] + 2 S-adenosyl-L-methionine = (sulfur carrier)-H + biotin + 2 5'-deoxyadenosine + 2 L-methionine + 2 oxidized [2Fe-2S]-[ferredoxin]. The protein operates within cofactor biosynthesis; biotin biosynthesis; biotin from 7,8-diaminononanoate: step 2/2. In terms of biological role, catalyzes the conversion of dethiobiotin (DTB) to biotin by the insertion of a sulfur atom into dethiobiotin via a radical-based mechanism. The sequence is that of Biotin synthase from Leptothrix cholodnii (strain ATCC 51168 / LMG 8142 / SP-6) (Leptothrix discophora (strain SP-6)).